A 225-amino-acid polypeptide reads, in one-letter code: Ribonuclease HII (225 aa).

Residues 2 to 210 (GIVVGVDEAG…VRKLGGPWRS (209 aa)) enclose the RNase H type-2 domain. Positions 8, 9, and 107 each coordinate a divalent metal cation.

Belongs to the RNase HII family. It depends on Mn(2+) as a cofactor. Mg(2+) serves as cofactor.

The protein resides in the cytoplasm. It carries out the reaction Endonucleolytic cleavage to 5'-phosphomonoester.. Endonuclease that specifically degrades the RNA of RNA-DNA hybrids. This is Ribonuclease HII (rnhB) from Aeropyrum pernix (strain ATCC 700893 / DSM 11879 / JCM 9820 / NBRC 100138 / K1).